Consider the following 407-residue polypeptide: Putative metabolite transport protein HI_1104 (407 aa).

At 1–16 (MTNKVNSYGWKALIGS) the chain is on the cytoplasmic side. Residues 17–37 (AVGYGMDGFDLLILGFMLSAI) traverse the membrane as a helical segment. At 38-48 (SADLNLTPAQG) the chain is on the periplasmic side. A helical membrane pass occupies residues 49 to 69 (GSLVTWTLIGAVFGGILFGAL). At 70–77 (SDKYGRVR) the chain is on the cytoplasmic side. The helical transmembrane segment at 78–98 (VLTWTILLFAVFTGLCAIAQG) threads the bilayer. At 99 to 107 (YWDLLIYRT) the chain is on the periplasmic side. A helical transmembrane segment spans residues 108–128 (IAGIGLGGEFGIGMALAAEAW). The Cytoplasmic portion of the chain corresponds to 129-138 (PARHRAKAAS). A helical membrane pass occupies residues 139–159 (YVALGWQVGVLGAALLTPLLL). Position 160 (P160) is a topological domain, periplasmic. A helical transmembrane segment spans residues 161–181 (HIGWRGMFLVGIFPAFVAWFL). Topologically, residues 182-224 (RSHLHEPEIFTQKQTALSTQSSFTDKLRSFQLLIKDKATSKIS) are cytoplasmic. The helical transmembrane segment at 225–245 (LGIVVLTSVQNFGYYGIMIWL) threads the bilayer. Over 246–261 (PNFLSKQLGFSLTKSG) the chain is Periplasmic. A helical membrane pass occupies residues 262–282 (LWTAVTVCGMMAGIWIFGQLA). Residues 283–288 (DRIGRK) are Cytoplasmic-facing. Residues 289–309 (PSFLLFQLGAVISIVVYSQLT) traverse the membrane as a helical segment. Residues 310 to 312 (DPD) are Periplasmic-facing. The helical transmembrane segment at 313–333 (IMLLAGAFLGMFVNGMLGGYG) threads the bilayer. Residues 334–357 (ALMAEAYPTEARATAQNVLFNIGR) lie on the Cytoplasmic side of the membrane. The next 2 membrane-spanning stretches (helical) occupy residues 358–378 (AVGG…SFQT) and 379–399 (AIAL…FLIP). Residues 400-407 (ELKGKALD) are Cytoplasmic-facing.

It belongs to the major facilitator superfamily. Aromatic acid:H(+) symporter (AAHS) (TC 2.A.1.15) family.

It localises to the cell inner membrane. This is Putative metabolite transport protein HI_1104 from Haemophilus influenzae (strain ATCC 51907 / DSM 11121 / KW20 / Rd).